A 372-amino-acid polypeptide reads, in one-letter code: L-selectin (372 aa).

Positions 1 to 28 (MIFPRKCQSTQRDLWNIFKLWGWTMLCC) are cleaved as a signal peptide. Positions 29 to 38 (DFLAHHGTDC) are excised as a propeptide. Topologically, residues 39–332 (WTYHYSENPM…FSMIKEGDYN (294 aa)) are extracellular. Residues 55 to 155 (RFCRENYTDL…ACHKPKAALC (101 aa)) form the C-type lectin domain. Intrachain disulfides connect Cys57–Cys155, Cys128–Cys147, Cys128–Cys160, Cys160–Cys171, Cys165–Cys180, Cys182–Cys191, Cys197–Cys241, Cys227–Cys254, Cys259–Cys303, and Cys289–Cys316. N-linked (GlcNAc...) asparagine glycans are attached at residues Asn60 and Asn104. Positions 118, 120, 126, 143, and 144 each coordinate Ca(2+). An EGF-like domain is found at 156–192 (YTASCQPWSCSGHGECVEIINNYTCNCDVGYYGPQCQ). Asn177 carries N-linked (GlcNAc...) asparagine glycosylation. Sushi domains follow at residues 195-256 (IQCE…TCQV) and 257-318 (IQCE…ICQK). Asn226, Asn232, Asn246, and Asn271 each carry an N-linked (GlcNAc...) asparagine glycan. Residues 333 to 355 (PLFIPVAVMVTAFSGLAFIIWLA) form a helical membrane-spanning segment. The Cytoplasmic segment spans residues 356–372 (RRLKKGKKSKKSMDDPY).

The protein belongs to the selectin/LECAM family. In terms of assembly, interaction with SELPLG/PSGL1 and PODXL2 is required for promoting recruitment and rolling of leukocytes. This interaction is dependent on the sialyl Lewis X glycan modification of SELPLG and PODXL2, and tyrosine sulfation modifications of SELPLG. Sulfation on 'Tyr-51' of SELPLG is important for L-selectin binding. Post-translationally, N-glycosylated.

The protein resides in the cell membrane. Functionally, calcium-dependent lectin that mediates cell adhesion by binding to glycoproteins on neighboring cells. Mediates the adherence of lymphocytes to endothelial cells of high endothelial venules in peripheral lymph nodes. Promotes initial tethering and rolling of leukocytes in endothelia. This Macaca mulatta (Rhesus macaque) protein is L-selectin (SELL).